Consider the following 519-residue polypeptide: 3-octaprenyl-4-hydroxybenzoate carboxy-lyase (519 aa).

Asparagine 177 contributes to the Mn(2+) binding site. Residues 180–182, 194–196, and 199–200 contribute to the prenylated FMN site; these read IYR, RWL, and RG. Glutamate 243 lines the Mn(2+) pocket. Catalysis depends on aspartate 318, which acts as the Proton donor.

The protein belongs to the UbiD family. Homohexamer. The cofactor is prenylated FMN. Mn(2+) serves as cofactor.

Its subcellular location is the cell membrane. The enzyme catalyses a 4-hydroxy-3-(all-trans-polyprenyl)benzoate + H(+) = a 2-(all-trans-polyprenyl)phenol + CO2. It participates in cofactor biosynthesis; ubiquinone biosynthesis. In terms of biological role, catalyzes the decarboxylation of 3-octaprenyl-4-hydroxy benzoate to 2-octaprenylphenol, an intermediate step in ubiquinone biosynthesis. The chain is 3-octaprenyl-4-hydroxybenzoate carboxy-lyase from Burkholderia pseudomallei (strain 1710b).